The sequence spans 370 residues: 3-dehydroquinate synthase (370 aa).

NAD(+)-binding positions include 108–112 (GVIGD), 132–133 (TT), Lys145, and Lys154. Zn(2+) is bound by residues Glu187, His249, and His267.

The protein belongs to the sugar phosphate cyclases superfamily. Dehydroquinate synthase family. It depends on Co(2+) as a cofactor. The cofactor is Zn(2+). Requires NAD(+) as cofactor.

It is found in the cytoplasm. The enzyme catalyses 7-phospho-2-dehydro-3-deoxy-D-arabino-heptonate = 3-dehydroquinate + phosphate. It functions in the pathway metabolic intermediate biosynthesis; chorismate biosynthesis; chorismate from D-erythrose 4-phosphate and phosphoenolpyruvate: step 2/7. Its function is as follows. Catalyzes the conversion of 3-deoxy-D-arabino-heptulosonate 7-phosphate (DAHP) to dehydroquinate (DHQ). The protein is 3-dehydroquinate synthase of Cereibacter sphaeroides (strain ATCC 17029 / ATH 2.4.9) (Rhodobacter sphaeroides).